A 94-amino-acid polypeptide reads, in one-letter code: Co-chaperonin GroES (94 aa).

Belongs to the GroES chaperonin family. In terms of assembly, heptamer of 7 subunits arranged in a ring. Interacts with the chaperonin GroEL.

Its subcellular location is the cytoplasm. Its function is as follows. Together with the chaperonin GroEL, plays an essential role in assisting protein folding. The GroEL-GroES system forms a nano-cage that allows encapsulation of the non-native substrate proteins and provides a physical environment optimized to promote and accelerate protein folding. GroES binds to the apical surface of the GroEL ring, thereby capping the opening of the GroEL channel. This Leuconostoc citreum (strain KM20) protein is Co-chaperonin GroES.